The sequence spans 70 residues: Protein tam14 (70 aa).

The segment covering 1 to 19 (MPTVQTPSQRRANTQFQKN) has biased composition (polar residues). The disordered stretch occupies residues 1-20 (MPTVQTPSQRRANTQFQKNI). Residues 45–65 (IAMFFILLMSGGIILGILRFL) form a helical membrane-spanning segment.

This sequence belongs to the RAMP4 family.

Its subcellular location is the membrane. It is found in the endoplasmic reticulum membrane. Its function is as follows. Interacts with target proteins during their translocation into the lumen of the endoplasmic reticulum. Protects unfolded target proteins against degradation during ER stress. May facilitate glycosylation of target proteins after termination of ER stress. This chain is Protein tam14 (tam14), found in Schizosaccharomyces pombe (strain 972 / ATCC 24843) (Fission yeast).